A 764-amino-acid chain; its full sequence is Nucleolar transcription factor 1 (764 aa).

N-acetylmethionine is present on M1. Residues 1–21 (MNGEADCPTDLEMAAPKGQDR) form a disordered region. 2 consecutive DNA-binding regions (HMG box) follow at residues 112–180 (PKKP…ARFR) and 196–264 (PEKP…RDYI). T201 carries the phosphothreonine modification. Phosphoserine occurs at positions 273, 336, and 364. A DNA-binding region (HMG box 3) is located at residues 298–362 (TKPPPNSYSL…DYEVELLRFL (65 aa)). Over residues 370-379 (QQRVLGEEKM) the composition is skewed to basic and acidic residues. The interval 370-411 (QQRVLGEEKMLNINKKQTTSPASKKPSQEGGKGGSEKPKRPV) is disordered. A phosphoserine mark is found at S389, S412, S433, S435, S484, S495, S546, S584, and S638. DNA-binding regions (HMG box) lie at residues 407 to 475 (PKRP…GGER), 482 to 549 (PESP…SEMR), and 568 to 634 (KKPP…DLWV). The tract at residues 456–488 (YKAREAALKAQSERKPGGEREDRGKLPESPKRA) is disordered. Residues 457 to 488 (KAREAALKAQSERKPGGEREDRGKLPESPKRA) are compositionally biased toward basic and acidic residues. The disordered stretch occupies residues 546–576 (SEMRAPPAATNSSKKMKFQGEPKKPPMNGYQ). The tract at residues 648 to 764 (YISNKRKNMT…SGDSSDSDSN (117 aa)) is disordered. Over residues 664–674 (PKSSRTTLQSK) the composition is skewed to polar residues. Residues 677–745 (SEEDDDEEDD…DDDEDEDNES (69 aa)) are compositionally biased toward acidic residues. The segment covering 746–758 (EGSSSSSSSSGDS) has biased composition (low complexity).

Homodimer. Part of Pol I pre-initiation complex (PIC), in which Pol I core assembles with RRN3 and promoter-bound UTBF and SL1/TIF-IB complex. Interacts with TOP2A in the context of Pol I complex. Interacts with TBP. Interacts with TAF1A. Interacts with PHF6. Interacts with CEBPA (isoform 1 and isoform 4). Interacts with DDX11. Interacts with NOP53. Interacts with RASL11A. Interacts with DHX33. Binds to IRS1 and PIK3CA. Interacts with ALKBH2. Phosphorylated and activated by PIK3CA.

It is found in the nucleus. It localises to the nucleolus. Its function is as follows. Recognizes the ribosomal RNA gene promoter and activates transcription mediated by RNA polymerase I through cooperative interactions with the transcription factor SL1/TIF-IB complex. It binds specifically to the upstream control element. This Rattus norvegicus (Rat) protein is Nucleolar transcription factor 1 (Ubtf).